The chain runs to 123 residues: Heat-labile enterotoxin IIA, B chain (123 aa).

The N-terminal stretch at 1-19 (MSSKKIIGAFVLMTGILSG) is a signal peptide. Cysteine 33 and cysteine 104 form a disulfide bridge.

Heterohexamer of one A chain and of five B chains.

The biological activity of the toxin is produced by the A chain, which activates intracellular adenyl cyclase. The polypeptide is Heat-labile enterotoxin IIA, B chain (Escherichia coli).